The chain runs to 500 residues: Vitamin D(3) 25-hydroxylase (500 aa).

Cys446 provides a ligand contact to heme.

This sequence belongs to the cytochrome P450 family. Heme is required as a cofactor. Found in liver and kidney.

The protein localises to the endoplasmic reticulum membrane. It localises to the microsome membrane. The enzyme catalyses calciol + reduced [NADPH--hemoprotein reductase] + O2 = calcidiol + oxidized [NADPH--hemoprotein reductase] + H2O + H(+). It catalyses the reaction alfacalcidol + reduced [NADPH--hemoprotein reductase] + O2 = calcitriol + oxidized [NADPH--hemoprotein reductase] + H2O + H(+). It carries out the reaction dodecanoate + reduced [NADPH--hemoprotein reductase] + O2 = 12-hydroxydodecanoate + oxidized [NADPH--hemoprotein reductase] + H2O + H(+). The catalysed reaction is dodecanoate + reduced [NADPH--hemoprotein reductase] + O2 = 11-hydroxydodecanoate + oxidized [NADPH--hemoprotein reductase] + H2O + H(+). The enzyme catalyses 5beta-cholestane-3alpha,7alpha-diol + reduced [NADPH--hemoprotein reductase] + O2 = 5beta-cholestane-3alpha,7alpha,25-triol + oxidized [NADPH--hemoprotein reductase] + H2O + H(+). It catalyses the reaction 5beta-cholestane-3alpha,7alpha,12alpha-triol + reduced [NADPH--hemoprotein reductase] + O2 = 5beta-cholestane-3alpha,7alpha,12alpha,25-tetrol + oxidized [NADPH--hemoprotein reductase] + H2O + H(+). Its function is as follows. Catalyzes the 25-hydroxylation of vitamin D(3) (calciol), 1alpha-hydroxyvitamin D(3) (alphacalcidiol) and some C27 steroids. In addition the enzyme catalyzes the hydroxylation of positions 11 and 12 of dodecanoate. In Sus scrofa (Pig), this protein is Vitamin D(3) 25-hydroxylase (CYP2D25).